The following is a 290-amino-acid chain: Syntaxin (290 aa).

Positions 1-22 (MTKDRLAALKAAQSDDDDNDDV) are disordered. Over 1–267 (MTKDRLAALK…KYQSKARRKK (267 aa)) the chain is Cytoplasmic. Residues 32–114 (MEEFFEQVDE…EEHTNKSSAD (83 aa)) adopt a coiled-coil conformation. The t-SNARE coiled-coil homology domain occupies 194-256 (LADIEARHND…ETAKMDTKKA (63 aa)). Residues 268 to 288 (IMILVCLAILIIILVGVIGGT) traverse the membrane as a helical; Anchor for type IV membrane protein segment. The Extracellular segment spans residues 289 to 290 (LG).

It belongs to the syntaxin family.

It is found in the membrane. Its function is as follows. Potentially involved in docking of synaptic vesicles at presynaptic active zones. The polypeptide is Syntaxin (Aplysia californica (California sea hare)).